The following is a 616-amino-acid chain: ATP-dependent zinc metalloprotease FtsH 3 (616 aa).

Residues 1-9 lie on the Cytoplasmic side of the membrane; it reads MSKNNKKWR. The helical transmembrane segment at 10-30 threads the bilayer; that stretch reads NAGLYALLLIVVLALASAFFD. Topologically, residues 31–108 are lumenal; it reads RPTQTRETLS…VQPQSDEGFW (78 aa). A helical membrane pass occupies residues 109–129; it reads FRIASTLFLPILLLVGIFFLF. At 130 to 616 the chain is on the cytoplasmic side; sequence RRAQSGPGSQ…NNNAKLALLV (487 aa). Residue 201–208 participates in ATP binding; sequence GPPGTGKT. His-423 is a Zn(2+) binding site. Residue Glu-424 is part of the active site. Residues His-427 and Asp-504 each coordinate Zn(2+).

In the central section; belongs to the AAA ATPase family. The protein in the C-terminal section; belongs to the peptidase M41 family. Homohexamer (Potential). Part of a large complex that includes FtsH2 and PSII. Coimmunoprecipitates with YidC. The cofactor is Zn(2+).

The protein localises to the cellular thylakoid membrane. Acts as a processive, ATP-dependent zinc metallopeptidase for both cytoplasmic and membrane proteins. Plays a role in the quality control of integral membrane proteins. The polypeptide is ATP-dependent zinc metalloprotease FtsH 3 (Synechocystis sp. (strain ATCC 27184 / PCC 6803 / Kazusa)).